The primary structure comprises 669 residues: MAAPCVRLGSVRCTGTLLRYFCGSARHQAAAASHEEIDIPRRKSWDKTAVLQALAYTVSHDPTAAHYMFQDDPFLVPKTSSEFRLYSLSKESGRNAAKYIIGTHPKLFQNDIAEPHIPCLMPENFQPQIEGVSEEALKERIQLRRIKESIDLFDQLLQGGTAPSLETTNRLLDLICFYGDREPTRDIQTSEQNQQDDQDQQETEDSKKRPGQYRKASEILGSWRENNNAERIFNLMPERNAHSFCTLIQGMVKYGSSNKAFNTYTDLMNNRLTADVQTFNALILAAPDMKEKYNEKWDLIVELLKHMVQQNVRPNLLTFNSVLKSLRKCGTMARGLALQTINEMKALNIEPSLGTYNHLLGVFYKGALSPRGQTEILSEVLDEIEGRSFTLRDPDDVYFFTNAMRVCLDLKDIELAYRLHALQQTADNRGLMGDFYLQSTYYGRFFNLLCMMENIDVILKWYRELIPSLYYPNSRGMLDLLQALDMDNCLDLIPQIWKDIKQIGHSNKVELVEEVLKLMARDVQPAELQAAFADTALDIKSLYEVRDRVRIVLEWSSASLGNISVLLARAGRTEEAWKMLQRFKTNHRVPSTEVVDEFLSRAKMDANTNLAISLVQLAVGFSLPNTGKLAERVMEEFNVSEEQRLTLEDLQKSHSSSSSSSESSDSDRE.

A mitochondrion-targeting transit peptide spans 1–13 (MAAPCVRLGSVRC). PPR repeat units lie at residues 129-163 (IEGVSEEALKERIQLRRIKESIDLFDQLLQGGTAP), 164-199 (SLETTNRLLDLICFYGDREPTRDIQTSEQNQQDDQD), 209-239 (RPGQYRKASEILGSWRENNNAERIFNLMPER), 240-274 (NAHSFCTLIQGMVKYGSSNKAFNTYTDLMNNRLTA), 275-314 (DVQTFNALILAAPDMKEKYNEKWDLIVELLKHMVQQNVRP), 315-351 (NLLTFNSVLKSLRKCGTMARGLALQTINEMKALNIEP), 352-392 (SLGT…FTLR), 396-430 (DVYFFTNAMRVCLDLKDIELAYRLHALQQTADNRG), 438-472 (QSTYYGRFFNLLCMMENIDVILKWYRELIPSLYYP), 473-507 (NSRGMLDLLQALDMDNCLDLIPQIWKDIKQIGHSN), and 556-590 (SSASLGNISVLLARAGRTEEAWKMLQRFKTNHRVP). Residues 186–218 (DIQTSEQNQQDDQDQQETEDSKKRPGQYRKASE) form a disordered region. A compositionally biased stretch (acidic residues) spans 194–203 (QQDDQDQQET). A disordered region spans residues 648 to 669 (EDLQKSHSSSSSSSESSDSDRE). The segment covering 653-663 (SHSSSSSSSES) has biased composition (low complexity).

It belongs to the mitochondrion-specific ribosomal protein mS39 family.

Its subcellular location is the mitochondrion. Its function is as follows. Mitochondrial protein that may have a role in mitochondrial translation. The polypeptide is Small ribosomal subunit protein mS39 (ptcd3) (Xenopus laevis (African clawed frog)).